Here is a 453-residue protein sequence, read N- to C-terminus: MALPNKFFLWFCCFAWLCFPISLDSLPSRGEAQIVARTALESEAETWSLLNHLGGRHRPGLLSPLLKVLYDGHGEPPRLQPDDRALRYMKRLYKAYATKEGTPKSNRRHLYNTVRLFTPCAQHKQAPGDLAAGTFPSVDLLFNLDRVTVVEHLFKSVLLYTFNNSISFPFPVKCICNLVIKEPEFSSKTLPRAPYSFTYNSQFEFRKKYKWMEIDVTAPLEPLVASHKRNIHMSVNFTCAKDQLQHPSARDSLFNMTLLVAPSLLLYLNDTSAQAFHRWHSLHPKRKPSQGPDQRRELSAYPVGEEAAEGVRSSRHRRDQESVSSELKKPLVPASANLSEYFKQFLFPQNECELHDFRLSFSQLKWDNWIVAPHKYNPRYCKGDCPRAVGHRYGSPVHTMVQNIIHEKLDSSVPRPSCVPAKYSPLSVLAIEPDGSIAYKEYEDMIATKCTCR.

An N-terminal signal peptide occupies residues 1 to 27; sequence MALPNKFFLWFCCFAWLCFPISLDSLP. Residues 28–318 constitute a propeptide that is removed on maturation; the sequence is SRGEAQIVAR…EGVRSSRHRR (291 aa). Residues asparagine 163, asparagine 236, asparagine 255, and asparagine 269 are each glycosylated (N-linked (GlcNAc...) asparagine). Residues 282–328 form a disordered region; sequence LHPKRKPSQGPDQRRELSAYPVGEEAAEGVRSSRHRRDQESVSSELK. Residues 318-328 are compositionally biased toward basic and acidic residues; the sequence is RDQESVSSELK. An N-linked (GlcNAc...) asparagine glycan is attached at asparagine 337. 3 disulfides stabilise this stretch: cysteine 352/cysteine 418, cysteine 381/cysteine 450, and cysteine 385/cysteine 452.

This sequence belongs to the TGF-beta family. In terms of assembly, homodimer or heterodimer (Potential). But, in contrast to other members of this family, cannot be disulfide-linked. Post-translationally, phosphorylated; phosphorylation is critical for GDF9 function.

It localises to the secreted. Its function is as follows. Required for ovarian folliculogenesis. This Capra hircus (Goat) protein is Growth/differentiation factor 9 (GDF9).